A 508-amino-acid chain; its full sequence is Maturase K (508 aa).

This sequence belongs to the intron maturase 2 family. MatK subfamily.

The protein localises to the plastid. The protein resides in the chloroplast. Usually encoded in the trnK tRNA gene intron. Probably assists in splicing its own and other chloroplast group II introns. The chain is Maturase K from Collinsia heterophylla (Purple Chinese houses).